We begin with the raw amino-acid sequence, 429 residues long: DNA dC-&gt;dU-editing enzyme APOBEC3 (429 aa).

2 consecutive CMP/dCMP-type deaminase domains span residues Asp-38–Ala-154 and Glu-238–Leu-357. Zn(2+) is bound at residue His-71. Glu-73 functions as the Proton donor in the catalytic mechanism. 5 residues coordinate Zn(2+): Cys-105, Cys-108, His-288, Cys-316, and Cys-319.

This sequence belongs to the cytidine and deoxycytidylate deaminase family. As to quaternary structure, homodimer. It depends on Zn(2+) as a cofactor.

The protein resides in the cytoplasm. The catalysed reaction is a 2'-deoxycytidine in single-stranded DNA + H2O + H(+) = a 2'-deoxyuridine in single-stranded DNA + NH4(+). DNA deaminase (cytidine deaminase) which acts as an inhibitor of retrovirus replication and retrotransposon mobility via deaminase-dependent and -independent mechanisms. Selectively targets single-stranded DNA and does not deaminate double-stranded DNA or single- or double-stranded RNA. The sequence is that of DNA dC-&gt;dU-editing enzyme APOBEC3 (Apobec3) from Rattus norvegicus (Rat).